A 67-amino-acid polypeptide reads, in one-letter code: Large ribosomal subunit protein uL29 (67 aa).

Belongs to the universal ribosomal protein uL29 family.

This Exiguobacterium sibiricum (strain DSM 17290 / CCUG 55495 / CIP 109462 / JCM 13490 / 255-15) protein is Large ribosomal subunit protein uL29.